Consider the following 103-residue polypeptide: Large ribosomal subunit protein uL24 (103 aa).

This sequence belongs to the universal ribosomal protein uL24 family. As to quaternary structure, part of the 50S ribosomal subunit.

Functionally, one of two assembly initiator proteins, it binds directly to the 5'-end of the 23S rRNA, where it nucleates assembly of the 50S subunit. In terms of biological role, one of the proteins that surrounds the polypeptide exit tunnel on the outside of the subunit. This is Large ribosomal subunit protein uL24 from Lacticaseibacillus casei (strain BL23) (Lactobacillus casei).